Here is a 287-residue protein sequence, read N- to C-terminus: Leucine-rich repeat-containing protein 72 (287 aa).

LRR repeat units follow at residues 46–67, 68–89, 90–111, and 112–133; these read DVFE…SRFK, KLKY…TRNY, CLTE…HYLP, and SLHI…VKEL. The 39-residue stretch at 147–185 folds into the LRRCT domain; that stretch reads NPLCQYNLYRLYIIYHLPGVELLDRNQVTEKERRSMITI.

The sequence is that of Leucine-rich repeat-containing protein 72 (LRRC72) from Homo sapiens (Human).